We begin with the raw amino-acid sequence, 156 residues long: Oleosin Zm-I (156 aa).

Positions 1-30 (MADHHRGATGGGGGYGDLQRGGGMHGEAQQ) are disordered. Residue Ala2 is modified to N-acetylalanine. The interval 2-42 (ADHHRGATGGGGGYGDLQRGGGMHGEAQQQQKQGAMMTALK) is polar. Residues 8-25 (ATGGGGGYGDLQRGGGMH) show a composition bias toward gly residues. Positions 43 to 114 (AATAATFGGS…AALSVFSWMY (72 aa)) are hydrophobic. Transmembrane regions (helical) follow at residues 51–71 (GSML…LTVA) and 95–115 (GFVT…WMYK).

This sequence belongs to the oleosin family. The N-terminus is blocked.

The protein localises to the lipid droplet. The protein resides in the membrane. May have a structural role to stabilize the lipid body during desiccation of the seed by preventing coalescence of the oil. Probably interacts with both lipid and phospholipid moieties of lipid bodies. May also provide recognition signals for specific lipase anchorage in lipolysis during seedling growth. The sequence is that of Oleosin Zm-I (OLE16) from Zea mays (Maize).